A 565-amino-acid polypeptide reads, in one-letter code: Periplasmic trehalase (565 aa).

The first 30 residues, 1–30, serve as a signal peptide directing secretion; sequence MKSPAPSRPQKMALIPACIFLCFAALSVQA. Substrate is bound by residues Arg-152, 159–160, Asn-196, 205–207, 277–279, and Gly-310; these read WD, RSQ, and RPE. Active-site proton donor/acceptor residues include Asp-312 and Glu-496. Residue Glu-511 participates in substrate binding. The tract at residues 538-565 is disordered; that stretch reads PCDNVPATRPTVKSATTQPSTKEAQPTP. The span at 548–565 shows a compositional bias: polar residues; sequence TVKSATTQPSTKEAQPTP.

The protein belongs to the glycosyl hydrolase 37 family. In terms of assembly, monomer.

It is found in the periplasm. The catalysed reaction is alpha,alpha-trehalose + H2O = alpha-D-glucose + beta-D-glucose. Its function is as follows. Provides the cells with the ability to utilize trehalose at high osmolarity by splitting it into glucose molecules that can subsequently be taken up by the phosphotransferase-mediated uptake system. This is Periplasmic trehalase from Escherichia coli (strain 55989 / EAEC).